The following is a 178-amino-acid chain: Large ribosomal subunit protein bL25 (178 aa).

The protein belongs to the bacterial ribosomal protein bL25 family. CTC subfamily. Part of the 50S ribosomal subunit; part of the 5S rRNA/L5/L18/L25 subcomplex. Contacts the 5S rRNA. Binds to the 5S rRNA independently of L5 and L18.

Functionally, this is one of the proteins that binds to the 5S RNA in the ribosome where it forms part of the central protuberance. This Helicobacter hepaticus (strain ATCC 51449 / 3B1) protein is Large ribosomal subunit protein bL25.